We begin with the raw amino-acid sequence, 439 residues long: MTTIFALCTPWGRSGVAVIRISGEDAAKAFVHFGINSSIKPRTATFTPLYDKDGEVIDEAIVVYFVAPNSFTGEDVVEFHTHGSFAVIKMILAELGKIFVPAGPGEFSLRAFLNNKVDLTRAEAIVDLINSETEMQAKQAIRQMSGVLEKLYQNWRQQLIDILSNIEAYIDFPEEVNSSAIANIDYLLNNLQKSLESHLNDDRRGERLRQGIYVTILGEPNSGKSTLFNHLAKRDIAIVSEYAGTTRDPLEAHIDVAGYPIIIIDTAGIRESTDPVEQEGIKRAKLKAENADFKIVMLPYEKRDIFNREIMSLIDDKSICILSKADNITDQKLIPVFDFSFIPISVYCNIGIENLLNLIKQKVEKDFQFCNTDPFITSERQRKHIQNTLNIIKSVDLSLPMEIVSEDLRLSVRELGKVVGVISDDDILDNVFGKFCIGK.

(6S)-5-formyl-5,6,7,8-tetrahydrofolate is bound by residues arginine 20, glutamate 78, and lysine 116. The TrmE-type G domain occupies 211–364; sequence GIYVTILGEP…LLNLIKQKVE (154 aa). GTP contacts are provided by residues 221–226, 240–246, and 265–268; these read NSGKST, SEYAGTT, and DTAG. Mg(2+) is bound by residues serine 225 and threonine 246. Lysine 439 serves as a coordination point for (6S)-5-formyl-5,6,7,8-tetrahydrofolate.

Belongs to the TRAFAC class TrmE-Era-EngA-EngB-Septin-like GTPase superfamily. TrmE GTPase family. In terms of assembly, homodimer. Heterotetramer of two MnmE and two MnmG subunits. K(+) serves as cofactor.

It is found in the cytoplasm. Functionally, exhibits a very high intrinsic GTPase hydrolysis rate. Involved in the addition of a carboxymethylaminomethyl (cmnm) group at the wobble position (U34) of certain tRNAs, forming tRNA-cmnm(5)s(2)U34. The protein is tRNA modification GTPase MnmE of Ehrlichia chaffeensis (strain ATCC CRL-10679 / Arkansas).